A 310-amino-acid chain; its full sequence is Methionyl-tRNA formyltransferase (310 aa).

(6S)-5,6,7,8-tetrahydrofolate is bound at residue 111–114 (SLLP).

It belongs to the Fmt family.

It catalyses the reaction L-methionyl-tRNA(fMet) + (6R)-10-formyltetrahydrofolate = N-formyl-L-methionyl-tRNA(fMet) + (6S)-5,6,7,8-tetrahydrofolate + H(+). Its function is as follows. Attaches a formyl group to the free amino group of methionyl-tRNA(fMet). The formyl group appears to play a dual role in the initiator identity of N-formylmethionyl-tRNA by promoting its recognition by IF2 and preventing the misappropriation of this tRNA by the elongation apparatus. This Rhodopseudomonas palustris (strain ATCC BAA-98 / CGA009) protein is Methionyl-tRNA formyltransferase.